A 367-amino-acid polypeptide reads, in one-letter code: Quinolinate synthase (367 aa).

Residues His45 and Ser62 each contribute to the iminosuccinate site. Cys109 contributes to the [4Fe-4S] cluster binding site. Residues 140 to 142 (YVN) and Ser161 contribute to the iminosuccinate site. Position 229 (Cys229) interacts with [4Fe-4S] cluster. Residues 255–257 (HPE) and Thr272 each bind iminosuccinate. Cys319 is a binding site for [4Fe-4S] cluster.

Belongs to the quinolinate synthase family. Type 3 subfamily. [4Fe-4S] cluster serves as cofactor.

The protein localises to the cytoplasm. The enzyme catalyses iminosuccinate + dihydroxyacetone phosphate = quinolinate + phosphate + 2 H2O + H(+). It functions in the pathway cofactor biosynthesis; NAD(+) biosynthesis; quinolinate from iminoaspartate: step 1/1. Catalyzes the condensation of iminoaspartate with dihydroxyacetone phosphate to form quinolinate. This Geobacillus thermodenitrificans (strain NG80-2) protein is Quinolinate synthase.